A 209-amino-acid polypeptide reads, in one-letter code: Large ribosomal subunit protein uL3 (209 aa).

Q150 carries the post-translational modification N5-methylglutamine.

Belongs to the universal ribosomal protein uL3 family. Part of the 50S ribosomal subunit. Forms a cluster with proteins L14 and L19. Methylated by PrmB.

In terms of biological role, one of the primary rRNA binding proteins, it binds directly near the 3'-end of the 23S rRNA, where it nucleates assembly of the 50S subunit. In Aliivibrio salmonicida (strain LFI1238) (Vibrio salmonicida (strain LFI1238)), this protein is Large ribosomal subunit protein uL3.